The chain runs to 54 residues: MAATDVRPKITLACVECKERNYITKKNRRNNPDRLEMKKHCPRCNAHTAHRETR.

It belongs to the bacterial ribosomal protein bL33 family.

This is Large ribosomal subunit protein bL33B (rpmG2) from Streptomyces coelicolor (strain ATCC BAA-471 / A3(2) / M145).